Reading from the N-terminus, the 176-residue chain is Shikimate kinase (176 aa).

Residue 14–19 (GAGKST) coordinates ATP. Residue S18 participates in Mg(2+) binding. Positions 36, 60, and 83 each coordinate substrate. Residue R121 coordinates ATP. R140 contacts substrate.

The protein belongs to the shikimate kinase family. Monomer. Mg(2+) serves as cofactor.

It is found in the cytoplasm. The enzyme catalyses shikimate + ATP = 3-phosphoshikimate + ADP + H(+). Its pathway is metabolic intermediate biosynthesis; chorismate biosynthesis; chorismate from D-erythrose 4-phosphate and phosphoenolpyruvate: step 5/7. Its function is as follows. Catalyzes the specific phosphorylation of the 3-hydroxyl group of shikimic acid using ATP as a cosubstrate. The sequence is that of Shikimate kinase from Francisella philomiragia subsp. philomiragia (strain ATCC 25017 / CCUG 19701 / FSC 153 / O#319-036).